We begin with the raw amino-acid sequence, 768 residues long: MEINEEAMAAHKRAFLDFLDQDVGKGVYMQAVRDMVQNKRHRLIIGMDDLRNHNLDLARRVIRTPGEYMQPASDAVSEVARNLDPKFLKEGERVMVGFSGPFGFHRVTPRDLMSSFIGTMVCVEGIVTKCSLVRPKVVKSVHFCPVTGDFLSREYRDITSFVGLPTGSVYPTRDDNGNLLVTEYGMCEYKDHQTLSMQEVPENSAPGQLPRTVDVIVEDDLVDCCKPGDRVSIVGVYKALPGKSKGSVSGVFRTVLIANNVSLLNKEANAPVYTREDLKRMKEISRRNDTFDLLGNSLAPSIYGHLWIKKAVVLLMLGGVEKNLKNGTHLRGDINMMMVGDPSVAKSQLLRAVMNIAPLAISTTGRGSSGVGLTAAVTSDQETGERRLEAGAMVLADRGVVCIDEFDKMNDQDRVAIHEVMEQQTVTIAKAGIHASLNARCSVIAAANPIYGTYDRSLTPTKNIGLPDSLLSRFDLLFIVLDQMDPEIDRQISEHVARMHRYCTDDGGARSLDKEGYAEEDDGDANAAIFVKYDRMLHGQDRRRGKKSKQDRLTVKFLKKYIHYAKNLIQPRLTDEASDHIATSYAELRDGSANAKSGGGTLPITARTLETIIRLSTAHAKMKLRHEVLKSDVEAALQVLNFAIYHKELTEMEEREQREMEMKQQADHDAGATGGTVDGHGSSGNDPMDVDVGSNDQNVSAERIEAFEALLGQHVLANHIDQMSIDDIEQMVNRESTAPYTRSQVEFILERMQDANRVMIRDGVVRII.

One can recognise an MCM domain in the interval 290–497 (TFDLLGNSLA…IDRQISEHVA (208 aa)). 340 to 347 (GDPSVAKS) serves as a coordination point for ATP. The Arginine finger motif lies at 472 to 475 (SRFD). Residues 661–670 (EMKQQADHDA) show a composition bias toward basic and acidic residues. Residues 661–689 (EMKQQADHDAGATGGTVDGHGSSGNDPMD) are disordered. Gly residues predominate over residues 672–682 (ATGGTVDGHGS).

The protein belongs to the MCM family.

It is found in the nucleus. The catalysed reaction is ATP + H2O = ADP + phosphate + H(+). Functionally, acts as a factor that allows the DNA to undergo a single round of replication per cell cycle. Required for DNA replication and cell proliferation. May act as a component of the MCM complex which is the putative replicative helicase of the replication licensing system in eukaryotic cells. In Zea mays (Maize), this protein is DNA replication licensing factor MCM3 homolog 2 (ROA2).